A 707-amino-acid polypeptide reads, in one-letter code: MPELRGGVWRARLRSKKVYDVQDADPAASPVSPAPRGRTGRRGGAAAGRGNKTVAEGGGRKALKPRGKGCRAVDLCKDQPCKDLPEVIARKAVTGKAQEDLGLNKVADRAANLMMDGESGDKFAAAEDESTTTPVPERVQVGNSPEYITDRKLGKGGFGQVYVGRRVSGGGSRTGPDAQEVALKFEHRSSKGCNYGPPYEWQVYHTLNGCYGIPSVHYKGRLGDYYILVMDMLGPSLWDVWNSVGQAMSAHMVACIAVEAISILEKLHSKGFVHGDVKPENFLLGHPGSVDEKKLFLIDLGLASRWKEASSGQHVDYDQRPDVFRGTIRYASVHAHLGRTGSRRDDLESLAYTLIFLIRGRLPWQGYQGDNKSFLVCKKKMATSPELLCCFCPAPFKHFLEMVTNMKFDEEPNYPKLISLFDGLIEGPASRPIRIDGALKVGQKRGRMVVNLDDDEQPKKKVRLGSPATQWISVYNARRPMKQRYHYNVADSRLHQHIEKGNEDGLYISCVSSSANFWALIMDAGTGFCSQVYELSQVFLHKDWIMEQWEKNYYITAIAGATNGSSLVVMSKGTPYTQQSYKVSESFPYKWINKKWKEGFHVTSMATAGNRWGVVMSRNAGYSHQVVELDFLYPSEGIHRRWETGYRITSTAATPDQAAFILSIPKRKPMDETQETLRTSSFPSNHVKEKWSKNLYIASICYGRTVC.

The interval 19-67 (YDVQDADPAASPVSPAPRGRTGRRGGAAAGRGNKTVAEGGGRKALKPRG) is disordered. Low complexity predominate over residues 24 to 37 (ADPAASPVSPAPRG). The Protein kinase domain maps to 147-425 (YITDRKLGKG…KLISLFDGLI (279 aa)). Residues 153–161 (LGKGGFGQV) and Lys-184 contribute to the ATP site. Asp-276 (proton acceptor) is an active-site residue.

The protein belongs to the protein kinase superfamily. CK1 Ser/Thr protein kinase family. Casein kinase I subfamily. Monomer. Interacts with GHD7 (via C-terminus). Interacts with SLR1. Autophosphorylated. In terms of tissue distribution, expressed in roots, leaves and stems. Expressed in leaf vascular bundles, and proximal regions of the shoot and roots.

The protein localises to the cytoplasm. The protein resides in the nucleus. The enzyme catalyses L-seryl-[protein] + ATP = O-phospho-L-seryl-[protein] + ADP + H(+). The catalysed reaction is L-threonyl-[protein] + ATP = O-phospho-L-threonyl-[protein] + ADP + H(+). Its function is as follows. Casein kinases are operationally defined by their preferential utilization of acidic proteins such as caseins as substrates. It can phosphorylate a large number of proteins. Can phosphorylate casein on threonine residues in vitro. Involved in the regulation of flowering time through gibberellin (GA) signaling, and independently of photoperiod. Phosphorylates the DELLA protein SLR1, stabilizing SLR1 protein and sustaining SLR1 activity as repressor of GA signaling. Required for normal development of male floral organs and grains, through modulation of GA signaling. Targeted and repressed by the homeobox protein HAZ1 during GA signaling. Can phosphorylate phosvitin and SLR1 in vitro. Is not required for clock function in either the presence or the absence of light signals. Involved in a genetic control pathway for photoperiodic flowering under long day (LD) conditions that includes HD1, GHD7, HD5 and HD2. Phosphorylates and activates GHD7, a major floral repressor under LD conditions. Phosphorylation of GHD7 enhances its function in the repression of EHD1, HD3A and HD3B/RFT1, and obviously delaying flowering. This Oryza sativa subsp. japonica (Rice) protein is Casein kinase 1-like protein HD16.